The chain runs to 393 residues: Isocitrate dehydrogenase [NAD] subunit gamma, mitochondrial (393 aa).

The transit peptide at 1–39 directs the protein to the mitochondrion; that stretch reads MALKVATVAGSAAKAVLGPALLCRPWEVLGAHEVPSRNI. Positions 120 and 133 each coordinate citrate. Residues Arg136, Arg167, and Asp254 each coordinate substrate. Asp254 provides a ligand contact to Mn(2+). ADP is bound by residues Asn312, Thr313, and Asn324.

The protein belongs to the isocitrate and isopropylmalate dehydrogenases family. Heterooligomer of subunits alpha (IDH3A), beta (IDH3B), and gamma (IDH3G) in the apparent ratio of 2:1:1. The heterodimer containing one IDH3A and one IDH3B subunit and the heterodimer containing one IDH3A and one IDH3G subunit assemble into a heterotetramer (which contains two subunits of IDH3A, one of IDH3B and one of IDH3G) and further into the heterooctamer. The cofactor is Mg(2+). Requires Mn(2+) as cofactor.

The protein localises to the mitochondrion. The heterotetramer and the heterodimer composed of IDH3A and IDH3G subunits can be allosterically activated by citrate (CIT) or/and ADP, and the two activators can act independently or synergistically. The heterodimer composed of IDH3A and IDH3B subunits cannot be allosterically regulated and the allosteric regulation of the heterotetramer is through the IDH3G subunit and not the IDH3B subunit. The IDH3G subunit contains the allosteric site which consists of a CIT-binding site and an ADP-binding site, and the binding of CIT and ADP causes conformational changes at the allosteric site which are transmitted to the active site in the catalytic subunit (IDH3A) through a cascade of conformational changes at the heterodimer interface, leading to stabilization of the isocitrate-binding at the active site and thus activation of the enzyme. ATP can activate the heterotetramer and the heterodimer composed of IDH3A and IDH3G subunits at low concentrations but inhibits their activities at high concentrations, whereas ATP exhibits only inhibitory effect on the heterodimer composed of IDH3A and IDH3B subunits. Functionally, regulatory subunit which plays a role in the allosteric regulation of the enzyme catalyzing the decarboxylation of isocitrate (ICT) into alpha-ketoglutarate. The heterodimer composed of the alpha (IDH3A) and beta (IDH3B) subunits and the heterodimer composed of the alpha (IDH3A) and gamma (IDH3G) subunits, have considerable basal activity but the full activity of the heterotetramer (containing two subunits of IDH3A, one of IDH3B and one of IDH3G) requires the assembly and cooperative function of both heterodimers. This chain is Isocitrate dehydrogenase [NAD] subunit gamma, mitochondrial (IDH3G), found in Homo sapiens (Human).